Reading from the N-terminus, the 162-residue chain is Dihydrofolate reductase (162 aa).

In terms of domain architecture, DHFR spans 3–161 (KITIIAACAE…VAYTFVHYLG (159 aa)). 7-9 (IAA) contributes to the substrate binding site. NADP(+) is bound by residues 8–9 (AA) and 16–21 (IGAGNA). Aspartate 29 contributes to the substrate binding site. Residue 45 to 48 (GRKT) coordinates NADP(+). A substrate-binding site is contributed by arginine 60. Residues 65–68 (ISRQ) and 98–103 (MGGAQI) each bind NADP(+). A substrate-binding site is contributed by threonine 117.

Belongs to the dihydrofolate reductase family.

It catalyses the reaction (6S)-5,6,7,8-tetrahydrofolate + NADP(+) = 7,8-dihydrofolate + NADPH + H(+). Its pathway is cofactor biosynthesis; tetrahydrofolate biosynthesis; 5,6,7,8-tetrahydrofolate from 7,8-dihydrofolate: step 1/1. Its function is as follows. Key enzyme in folate metabolism. Catalyzes an essential reaction for de novo glycine and purine synthesis, and for DNA precursor synthesis. In Neisseria gonorrhoeae, this protein is Dihydrofolate reductase (folA).